The following is a 476-amino-acid chain: tRNA(Ile)-lysidine synthase (476 aa).

ATP is bound at residue 30 to 35 (SGGPDS).

Belongs to the tRNA(Ile)-lysidine synthase family.

The protein localises to the cytoplasm. It catalyses the reaction cytidine(34) in tRNA(Ile2) + L-lysine + ATP = lysidine(34) in tRNA(Ile2) + AMP + diphosphate + H(+). Functionally, ligates lysine onto the cytidine present at position 34 of the AUA codon-specific tRNA(Ile) that contains the anticodon CAU, in an ATP-dependent manner. Cytidine is converted to lysidine, thus changing the amino acid specificity of the tRNA from methionine to isoleucine. This chain is tRNA(Ile)-lysidine synthase, found in Bacillus cereus (strain ATCC 10987 / NRS 248).